A 347-amino-acid chain; its full sequence is Molybdenum cofactor biosynthesis bifunctional protein (347 aa).

The molybdenum cofactor biosynthesis protein C stretch occupies residues 1–158 (MFTHLDENQQ…EKTGGKADVS (158 aa)). Substrate-binding positions include 75–77 (FCH) and 116–117 (ME). Catalysis depends on Asp-131, which acts as the For MoaC activity. The interval 159 to 347 (QTPLYGLVLT…NSPEDYGQIN (189 aa)) is molybdenum cofactor guanylyltransferase. GTP contacts are provided by residues 167-169 (LTG), Lys-179, Asp-226, and Asp-255. Asp-255 lines the Mg(2+) pocket.

The protein in the N-terminal section; belongs to the MoaC family. This sequence in the C-terminal section; belongs to the MobA family. Requires Mg(2+) as cofactor.

It is found in the cytoplasm. The enzyme catalyses Mo-molybdopterin + GTP + H(+) = Mo-molybdopterin guanine dinucleotide + diphosphate. It carries out the reaction (8S)-3',8-cyclo-7,8-dihydroguanosine 5'-triphosphate = cyclic pyranopterin phosphate + diphosphate. It participates in cofactor biosynthesis; molybdopterin biosynthesis. Functionally, catalyzes the conversion of (8S)-3',8-cyclo-7,8-dihydroguanosine 5'-triphosphate to cyclic pyranopterin monophosphate (cPMP). In terms of biological role, transfers a GMP moiety from GTP to Mo-molybdopterin (Mo-MPT) cofactor (Moco or molybdenum cofactor) to form Mo-molybdopterin guanine dinucleotide (Mo-MGD) cofactor. The sequence is that of Molybdenum cofactor biosynthesis bifunctional protein (moaC/mobA) from Synechocystis sp. (strain ATCC 27184 / PCC 6803 / Kazusa).